A 356-amino-acid chain; its full sequence is Histidinol-phosphate aminotransferase 2 (356 aa).

Lysine 214 bears the N6-(pyridoxal phosphate)lysine mark.

It belongs to the class-II pyridoxal-phosphate-dependent aminotransferase family. Histidinol-phosphate aminotransferase subfamily. Homodimer. The cofactor is pyridoxal 5'-phosphate.

The catalysed reaction is L-histidinol phosphate + 2-oxoglutarate = 3-(imidazol-4-yl)-2-oxopropyl phosphate + L-glutamate. It functions in the pathway amino-acid biosynthesis; L-histidine biosynthesis; L-histidine from 5-phospho-alpha-D-ribose 1-diphosphate: step 7/9. This chain is Histidinol-phosphate aminotransferase 2, found in Dechloromonas aromatica (strain RCB).